Reading from the N-terminus, the 352-residue chain is Putative pectinesterase 11 (352 aa).

Residues 13 to 35 form a helical membrane-spanning segment; that stretch reads ANYHHIIIINIFILSSITSSSMA. The N-linked (GlcNAc...) asparagine glycan is linked to N76. The Proton donor role is filled by D175. The active-site Nucleophile is the D196. An N-linked (GlcNAc...) asparagine glycan is attached at N218. Substrate-binding residues include R252 and W254. The interval 332–352 is disordered; it reads LRPAPSHFKNAPKQTQNKEIN. Residues 343 to 352 are compositionally biased toward polar residues; sequence PKQTQNKEIN.

Belongs to the pectinesterase family.

It is found in the membrane. It catalyses the reaction [(1-&gt;4)-alpha-D-galacturonosyl methyl ester](n) + n H2O = [(1-&gt;4)-alpha-D-galacturonosyl](n) + n methanol + n H(+). The protein operates within glycan metabolism; pectin degradation; 2-dehydro-3-deoxy-D-gluconate from pectin: step 1/5. Its function is as follows. Acts in the modification of cell walls via demethylesterification of cell wall pectin. This Arabidopsis thaliana (Mouse-ear cress) protein is Putative pectinesterase 11 (PME11).